Consider the following 210-residue polypeptide: HTH-type transcriptional repressor FabR (210 aa).

The HTH tetR-type domain occupies 10–70 (KTRRSLVEAA…TMVDESGLML (61 aa)). A DNA-binding region (H-T-H motif) is located at residues 33–52 (SLREVAREAGIAPTSFYRHF).

As to quaternary structure, homodimer.

The protein localises to the cytoplasm. Its function is as follows. Represses the transcription of fabB, involved in unsaturated fatty acid (UFA) biosynthesis. By controlling UFA production, FabR directly influences the physical properties of the membrane bilayer. The chain is HTH-type transcriptional repressor FabR from Salmonella arizonae (strain ATCC BAA-731 / CDC346-86 / RSK2980).